Reading from the N-terminus, the 76-residue chain is MHFAQRVRALVVLNGVALLPQFACKQGLANGELVRLFAPWSGIPRPLYALFAGRKGMPAIARYFMDELTTRLANGV.

The protein to K.pneumoniae LtrA, E.coli YjiE, and YhcS.

This is an uncharacterized protein from Escherichia coli O6:H1 (strain CFT073 / ATCC 700928 / UPEC).